The sequence spans 2121 residues: Non-reducing polyketide synthase aoiG (2121 aa).

In terms of domain architecture, Starter acyltransferase (SAT) spans 5–258 (YIFGDQTVRV…LPVSIYAPYH (254 aa)). Residues 386–817 (SSKIAIIGFS…GGNTAVLVED (432 aa)) form the Ketosynthase family 3 (KS3) domain. Active-site for beta-ketoacyl synthase activity residues include C558, H693, and H735. The Malonyl-CoA:ACP transacylase (MAT) domain maps to 921 to 1239 (FLFTGQGAQQ…LSVLHLAGVR (319 aa)). The interval 1302 to 1433 (QKILEEEMTA…CTIELQRPHQ (132 aa)) is N-terminal hotdog fold. The region spanning 1302–1608 (QKILEEEMTA…FQKVARRVLE (307 aa)) is the PKS/mFAS DH domain. Residue H1334 is the Proton acceptor; for dehydratase activity of the active site. The interval 1461-1608 (THKMRRGVAY…FQKVARRVLE (148 aa)) is C-terminal hotdog fold. D1519 functions as the Proton donor; for dehydratase activity in the catalytic mechanism. The 78-residue stretch at 1646–1723 (PHVEDAWQQV…SLRIYLNMSS (78 aa)) folds into the Carrier 1 domain. O-(pantetheine 4'-phosphoryl)serine is present on S1683. Residues 1728–1752 (DSIETSSYPTPDESTTTTITSPSGS) show a composition bias toward low complexity. Residues 1728–1760 (DSIETSSYPTPDESTTTTITSPSGSDRNVGRNS) are disordered. The Carrier 2 domain occupies 1763–1840 (DGVGTTVGLV…AITAALHAIF (78 aa)). S1800 bears the O-(pantetheine 4'-phosphoryl)serine mark. The tract at residues 1872-1976 (TLFLFPDGSG…ILIDSPNPMG (105 aa)) is TE/CLC (thioesterase/Claisen cyclase) domain.

The cofactor is pantetheine 4'-phosphate.

Non-reducing polyketide synthase; part of the gene cluster that mediates the biosynthesis of a methylated derivative of known natural products orthosporin and diaporthin. AoiG catalyzes the biosynthesis of the hexaketide isocoumarin scaffold, via condensation of one acetyl-CoA starter unit with 6 malonyl-CoA units. An oxidoreductase that has still to be identified catalyzes the stereospecific reduction of the carbonyl moiety of the hexaketide isocoumarin scaffold to generate the S-configured secondary alcohol at C-11 of orthosporin. The methyltrasferase aoiF then catalyzes the biotransformation of not only orthosporin to diaporthin but also diaporthin to the final product, by performing a tandem methylation of the polyketide core. The polypeptide is Non-reducing polyketide synthase aoiG (Aspergillus oryzae (strain ATCC 42149 / RIB 40) (Yellow koji mold)).